The following is a 199-amino-acid chain: Female-specific protein transformer (199 aa).

Disordered stretches follow at residues 1–121 and 178–199; these read MDAD…RTPR and YRAG…QAPN. Residues 20–37 show a composition bias toward basic and acidic residues; the sequence is REKMPYFADEVRERDRVR. Basic residues-rich tracts occupy residues 56-69, 77-92, and 102-119; these read RRSR…RSRT, CQRR…RSGS, and SRRR…RSRT.

The protein resides in the nucleus speckle. Its function is as follows. Member of the regulatory pathway controlling female somatic sexual differentiation, regulated by Sxl. Activates dsx female-specific splicing by promoting the formation of a splicing enhancer complex which consists of tra, tra2 and sr proteins. The polypeptide is Female-specific protein transformer (tra) (Drosophila virilis (Fruit fly)).